A 96-amino-acid chain; its full sequence is Cytochrome c oxidase assembly factor 3 homolog, mitochondrial (96 aa).

Topologically, residues 1-50 (MSSQGEPKPEAQFAKRIDPTKEALTKEQLQFIRQVEMAQWKKKTDKLRGR) are mitochondrial matrix. Residues 51–73 (NVATGLAIGAVVLGIYGYTFYSV) traverse the membrane as a helical segment. The Mitochondrial intermembrane portion of the chain corresponds to 74 to 96 (SQEKIMDEIDEEAKVRVPKTGAN).

The protein belongs to the COA3 family. In terms of assembly, core component of the MITRAC (mitochondrial translation regulation assembly intermediate of cytochrome c oxidase complex) complex.

The protein localises to the mitochondrion inner membrane. Functionally, core component of the MITRAC (mitochondrial translation regulation assembly intermediate of cytochrome c oxidase complex) complex, that regulates cytochrome c oxidase assembly. MITRAC complexes regulate both translation of mitochondrial encoded components and assembly of nuclear-encoded components imported in mitochondrion. Required for efficient translation of MT-CO1 and mitochondrial respiratory chain complex IV assembly. This chain is Cytochrome c oxidase assembly factor 3 homolog, mitochondrial (coa3a), found in Danio rerio (Zebrafish).